A 134-amino-acid polypeptide reads, in one-letter code: ATP synthase epsilon chain (134 aa).

Belongs to the ATPase epsilon chain family. F-type ATPases have 2 components, CF(1) - the catalytic core - and CF(0) - the membrane proton channel. CF(1) has five subunits: alpha(3), beta(3), gamma(1), delta(1), epsilon(1). CF(0) has three main subunits: a, b and c.

Its subcellular location is the cell membrane. Its function is as follows. Produces ATP from ADP in the presence of a proton gradient across the membrane. The sequence is that of ATP synthase epsilon chain from Carboxydothermus hydrogenoformans (strain ATCC BAA-161 / DSM 6008 / Z-2901).